A 228-amino-acid chain; its full sequence is Cytidylate kinase (228 aa).

17-25 (GPTASGKGT) provides a ligand contact to ATP.

This sequence belongs to the cytidylate kinase family. Type 1 subfamily.

Its subcellular location is the cytoplasm. It carries out the reaction CMP + ATP = CDP + ADP. The catalysed reaction is dCMP + ATP = dCDP + ADP. The chain is Cytidylate kinase from Burkholderia multivorans (strain ATCC 17616 / 249).